The sequence spans 1488 residues: Chromosome partition protein MukB (1488 aa).

34–41 contacts ATP; it reads GGNGAGKS. Coiled coils occupy residues 326–418, 444–472, and 509–602; these read LEAD…QYNQ, LDTFQAKEQEATEKLLSLEQKMSVAQTAH, and RHLA…QRAP. The flexible hinge stretch occupies residues 666–783; it reads PGGAEDQRLN…SLPIFGRAAR (118 aa). 3 coiled-coil regions span residues 835-923, 977-1116, and 1209-1265; these read EAEI…AKLE, EMLS…AKAG, and VEAI…LQSV. The segment at 1049 to 1074 is disordered; it reads ADSGAEERARQRRDELHAQLSNNRSR. Basic and acidic residues predominate over residues 1051 to 1065; it reads SGAEERARQRRDELH.

The protein belongs to the SMC family. MukB subfamily. As to quaternary structure, homodimerization via its hinge domain. Binds to DNA via its C-terminal region. Interacts, and probably forms a ternary complex, with MukE and MukF via its C-terminal region. The complex formation is stimulated by calcium or magnesium. Interacts with tubulin-related protein FtsZ.

The protein resides in the cytoplasm. It localises to the nucleoid. Its function is as follows. Plays a central role in chromosome condensation, segregation and cell cycle progression. Functions as a homodimer, which is essential for chromosome partition. Involved in negative DNA supercoiling in vivo, and by this means organize and compact chromosomes. May achieve or facilitate chromosome segregation by condensation DNA from both sides of a centrally located replisome during cell division. This is Chromosome partition protein MukB from Salmonella schwarzengrund (strain CVM19633).